The primary structure comprises 274 residues: Large ribosomal subunit protein uL2 (274 aa).

The segment at Gly-223–Lys-274 is disordered. Positions Asp-230–Ser-240 are enriched in basic and acidic residues. The span at Tyr-256–Lys-274 shows a compositional bias: basic residues.

Belongs to the universal ribosomal protein uL2 family. In terms of assembly, part of the 50S ribosomal subunit. Forms a bridge to the 30S subunit in the 70S ribosome.

Functionally, one of the primary rRNA binding proteins. Required for association of the 30S and 50S subunits to form the 70S ribosome, for tRNA binding and peptide bond formation. It has been suggested to have peptidyltransferase activity; this is somewhat controversial. Makes several contacts with the 16S rRNA in the 70S ribosome. The sequence is that of Large ribosomal subunit protein uL2 from Nautilia profundicola (strain ATCC BAA-1463 / DSM 18972 / AmH).